The chain runs to 215 residues: LysM and putative peptidoglycan-binding domain-containing protein 2 (215 aa).

Residues 1-40 are disordered; the sequence is MADSSPAPSLRAGGPREPRPSAPSPPPPHSRLGSEAEEAE. Alanine 2 carries the N-acetylalanine modification. Serine 5, serine 24, serine 34, and serine 58 each carry phosphoserine. Over residues 20-29 the composition is skewed to pro residues; sequence PSAPSPPPPH. The LysM domain maps to 72–116; the sequence is VEHRVRAGDTLQGIALKYGVSMEQIKRANKLFTNDCIFLKKTLNI. Positions 194 to 215 are disordered; it reads AKKLKGESRDEEGLYTASLYHS.

This Bos taurus (Bovine) protein is LysM and putative peptidoglycan-binding domain-containing protein 2 (LYSMD2).